Here is a 63-residue protein sequence, read N- to C-terminus: Large ribosomal subunit protein uL29 (63 aa).

It belongs to the universal ribosomal protein uL29 family.

The polypeptide is Large ribosomal subunit protein uL29 (rpmC) (Aggregatibacter actinomycetemcomitans (Actinobacillus actinomycetemcomitans)).